Consider the following 602-residue polypeptide: MCGIVGVVGNTNATDILIQGLEKLEYRGYDSAGIFVLDGADNHLVKAVGRIAELSAKTAGVEGTTGIGHTRWATHGKPTEDNAHPHRSETERFVLVHNGVIENYLEIKEEYLAGHHFKGQTDTEIAVHLIGKFAEEEGLSVLEAFKKALHIIRGSYAFALVDSQDPEVIYVAKNKSPLLIGLGEGYNMVCSDAMAMIRETNQYMEIHDQELVIVKADSVEVQDYDGNRRERASYTAELDLSDIGKGTYPYYMLKEIDEQPTVMRKLIQAYTDEAGQVVVDPDIIKAVQDADRIYILAAGTSYHAGFASKKMLEELTDTPVELGISSEWGYGMPLLSKKPLFIFISQSGETADSRQVLVKANEMGIPSLTVTNVPGSTLSREANYTMLLHAGPEIAVASTKAYTAQIAALAFLAKAVGEANGNAKAQAFDLVHELSIVAQSIESTLSEKETIEVKVRELLETTRNAFYIGRGQDYYVAMEASLKLKEISYIQCEGFAAGELKHGTIALIEEGTPVLALLSDPVLANHTRGNIQEVAARGAKVLTIAEENVAKDTDDIVLTTVHPYLSPISMVVPTQLVAYFATLHRGLDVDKPRNLAKSVTVE.

Residue Cys2 is the Nucleophile; for GATase activity of the active site. One can recognise a Glutamine amidotransferase type-2 domain in the interval 2 to 217 (CGIVGVVGNT…DQELVIVKAD (216 aa)). The interval 67–87 (IGHTRWATHGKPTEDNAHPHR) is disordered. Over residues 77–87 (KPTEDNAHPHR) the composition is skewed to basic and acidic residues. 2 SIS domains span residues 283–422 (IIKA…ANGN) and 455–592 (VREL…VDKP). Residue Lys597 is the For Fru-6P isomerization activity of the active site.

In terms of assembly, homodimer.

Its subcellular location is the cytoplasm. It carries out the reaction D-fructose 6-phosphate + L-glutamine = D-glucosamine 6-phosphate + L-glutamate. Its function is as follows. Catalyzes the first step in hexosamine metabolism, converting fructose-6P into glucosamine-6P using glutamine as a nitrogen source. This chain is Glutamine--fructose-6-phosphate aminotransferase [isomerizing], found in Streptococcus pneumoniae serotype 4 (strain ATCC BAA-334 / TIGR4).